Here is a 126-residue protein sequence, read N- to C-terminus: Protein ApaG (126 aa).

One can recognise an ApaG domain in the interval Asp2 to Asn126.

This chain is Protein ApaG, found in Vibrio cholerae serotype O1 (strain ATCC 39541 / Classical Ogawa 395 / O395).